Consider the following 299-residue polypeptide: Protease HtpX homolog (299 aa).

Transmembrane regions (helical) follow at residues 14–34 (ILVM…VGYL) and 39–59 (ATGG…IMVG). Residue His144 coordinates Zn(2+). Glu145 is an active-site residue. His148 contacts Zn(2+). Transmembrane regions (helical) follow at residues 159 to 179 (IALA…NFMW) and 196 to 216 (VFAI…ATMV). Residue Glu225 coordinates Zn(2+).

Belongs to the peptidase M48B family. It depends on Zn(2+) as a cofactor.

The protein resides in the cell membrane. This Limosilactobacillus fermentum (strain NBRC 3956 / LMG 18251) (Lactobacillus fermentum) protein is Protease HtpX homolog.